A 175-amino-acid polypeptide reads, in one-letter code: Ribosome-binding factor A (175 aa).

Positions 129 to 175 (GAKPAGEADPYRDRGSADEPSDAGGLVIRTSDGLEAENTGDDYQAED) are disordered. A compositionally biased stretch (acidic residues) spans 162–175 (LEAENTGDDYQAED).

This sequence belongs to the RbfA family. Monomer. Binds 30S ribosomal subunits, but not 50S ribosomal subunits or 70S ribosomes.

It localises to the cytoplasm. One of several proteins that assist in the late maturation steps of the functional core of the 30S ribosomal subunit. Associates with free 30S ribosomal subunits (but not with 30S subunits that are part of 70S ribosomes or polysomes). Required for efficient processing of 16S rRNA. May interact with the 5'-terminal helix region of 16S rRNA. The chain is Ribosome-binding factor A from Mycobacterium marinum (strain ATCC BAA-535 / M).